Reading from the N-terminus, the 742-residue chain is Phosphoribosylformylglycinamidine synthase subunit PurL (742 aa).

The active site involves histidine 54. ATP is bound by residues tyrosine 57 and lysine 96. Glutamate 98 lines the Mg(2+) pocket. Residues 99-102 (SHNH) and arginine 121 contribute to the substrate site. The active-site Proton acceptor is histidine 100. Mg(2+) is bound at residue aspartate 122. Glutamine 245 is a binding site for substrate. Aspartate 273 is a binding site for Mg(2+). 317-319 (ESQ) contributes to the substrate binding site. 2 residues coordinate ATP: aspartate 500 and glycine 537. Asparagine 538 provides a ligand contact to Mg(2+). Residue serine 540 participates in substrate binding.

It belongs to the FGAMS family. In terms of assembly, monomer. Part of the FGAM synthase complex composed of 1 PurL, 1 PurQ and 2 PurS subunits.

The protein resides in the cytoplasm. It carries out the reaction N(2)-formyl-N(1)-(5-phospho-beta-D-ribosyl)glycinamide + L-glutamine + ATP + H2O = 2-formamido-N(1)-(5-O-phospho-beta-D-ribosyl)acetamidine + L-glutamate + ADP + phosphate + H(+). It functions in the pathway purine metabolism; IMP biosynthesis via de novo pathway; 5-amino-1-(5-phospho-D-ribosyl)imidazole from N(2)-formyl-N(1)-(5-phospho-D-ribosyl)glycinamide: step 1/2. Part of the phosphoribosylformylglycinamidine synthase complex involved in the purines biosynthetic pathway. Catalyzes the ATP-dependent conversion of formylglycinamide ribonucleotide (FGAR) and glutamine to yield formylglycinamidine ribonucleotide (FGAM) and glutamate. The FGAM synthase complex is composed of three subunits. PurQ produces an ammonia molecule by converting glutamine to glutamate. PurL transfers the ammonia molecule to FGAR to form FGAM in an ATP-dependent manner. PurS interacts with PurQ and PurL and is thought to assist in the transfer of the ammonia molecule from PurQ to PurL. The sequence is that of Phosphoribosylformylglycinamidine synthase subunit PurL from Bacillus velezensis (strain DSM 23117 / BGSC 10A6 / LMG 26770 / FZB42) (Bacillus amyloliquefaciens subsp. plantarum).